A 968-amino-acid polypeptide reads, in one-letter code: RNA polymerase-associated protein RapA (968 aa).

Residues 164–334 (DVGRRHAPRV…FARLRLLDPN (171 aa)) enclose the Helicase ATP-binding domain. 177-184 (DEVGLGKT) is an ATP binding site. A DEAH box motif is present at residues 280 to 283 (DEAH). Positions 490 to 662 (RVEWLMGYLT…YLASPDQTEG (173 aa)) constitute a Helicase C-terminal domain.

The protein belongs to the SNF2/RAD54 helicase family. RapA subfamily. As to quaternary structure, interacts with the RNAP. Has a higher affinity for the core RNAP than for the holoenzyme. Its ATPase activity is stimulated by binding to RNAP.

Its function is as follows. Transcription regulator that activates transcription by stimulating RNA polymerase (RNAP) recycling in case of stress conditions such as supercoiled DNA or high salt concentrations. Probably acts by releasing the RNAP, when it is trapped or immobilized on tightly supercoiled DNA. Does not activate transcription on linear DNA. Probably not involved in DNA repair. The chain is RNA polymerase-associated protein RapA from Shigella boydii serotype 4 (strain Sb227).